Consider the following 250-residue polypeptide: NAD(P)H-hydrate epimerase (250 aa).

One can recognise a YjeF N-terminal domain in the interval A14–K238. N74–D78 serves as a coordination point for (6S)-NADPHX. N75 and D143 together coordinate K(+). (6S)-NADPHX is bound by residues G147–A154, Y159, and D180. Position 183 (S183) interacts with K(+).

Belongs to the NnrE/AIBP family. It depends on K(+) as a cofactor.

It catalyses the reaction (6R)-NADHX = (6S)-NADHX. The enzyme catalyses (6R)-NADPHX = (6S)-NADPHX. Catalyzes the epimerization of the S- and R-forms of NAD(P)HX, a damaged form of NAD(P)H that is a result of enzymatic or heat-dependent hydration. This is a prerequisite for the S-specific NAD(P)H-hydrate dehydratase to allow the repair of both epimers of NAD(P)HX. The chain is NAD(P)H-hydrate epimerase from Thalassiosira pseudonana (Marine diatom).